Here is a 436-residue protein sequence, read N- to C-terminus: Gamma-glutamyl phosphate reductase (436 aa).

This sequence belongs to the gamma-glutamyl phosphate reductase family.

The protein resides in the cytoplasm. It carries out the reaction L-glutamate 5-semialdehyde + phosphate + NADP(+) = L-glutamyl 5-phosphate + NADPH + H(+). It participates in amino-acid biosynthesis; L-proline biosynthesis; L-glutamate 5-semialdehyde from L-glutamate: step 2/2. Catalyzes the NADPH-dependent reduction of L-glutamate 5-phosphate into L-glutamate 5-semialdehyde and phosphate. The product spontaneously undergoes cyclization to form 1-pyrroline-5-carboxylate. In Prochlorococcus marinus subsp. pastoris (strain CCMP1986 / NIES-2087 / MED4), this protein is Gamma-glutamyl phosphate reductase.